Reading from the N-terminus, the 149-residue chain is Calmodulin (149 aa).

Ala2 carries the N-acetylalanine modification. EF-hand domains lie at 8–43 (DQIS…LGQN), 44–79 (PTEA…KMKD), 81–116 (DSEE…LGEK), and 117–149 (LTDE…MMAK). Asp21, Asp23, Asp25, Cys27, Glu32, Asp57, Asp59, Asn61, Thr63, Glu68, Asp94, Asp96, Asn98, and Glu105 together coordinate Ca(2+). Lys116 bears the N6,N6,N6-trimethyllysine mark. Residues Asp130, Asp132, Asp134, Gln136, and Glu141 each coordinate Ca(2+).

Belongs to the calmodulin family.

Functionally, calmodulin mediates the control of a large number of enzymes, ion channels and other proteins by Ca(2+). Among the enzymes to be stimulated by the calmodulin-Ca(2+) complex are a number of protein kinases and phosphatases. The sequence is that of Calmodulin (CCM1) from Capsicum annuum (Capsicum pepper).